The primary structure comprises 427 residues: MPAIALVGAQWGDEGKGKATDLVGDRVDYVVRYQGGNNAGHTVVIGDQEYALHLLPSGILTPGVIPVIANGVVIDPAVLFEELDALTARGVDVSRLLISANAHLIMPYHRALDKVSERFLGKGRIGTTGRGIGPTYADKTARAGVRVQDMFDPKILRKKLELALNDKNQILTKVYNRRALEVDRILDEYLGYAEKIRPYVVDTSLVLNRALDEGKTVFLEGSQGTLLDIDHGTYPFVTSSSPTAGGACSGSGIGPTRITKVIGILKAYTTRVGSGPFPTELEDEWGEWLRSRGHEYGTTTGRNRRCGWFDAPIARYATRINGITDFFLTKLDVLSGLERIPVCVAYDIDGVRHDEIPMTQTEFHHATPIYEYLDGWNEDISQARSFDDLPKNAQAYVRAIEEMSGAPISAIGVGPGREQTLELRPLV.

Residues 12 to 18 and 40 to 42 contribute to the GTP site; these read GDEGKGK and GHT. Asp-13 (proton acceptor) is an active-site residue. Asp-13 and Gly-40 together coordinate Mg(2+). Residues 13–16, 38–41, Thr-128, Arg-142, Gln-223, Thr-238, and Arg-302 contribute to the IMP site; these read DEGK and NAGH. Catalysis depends on His-41, which acts as the Proton donor. 298–304 is a binding site for substrate; it reads TTTGRNR. Residues Arg-304, 330 to 332, and 412 to 414 contribute to the GTP site; these read KLD and GVG.

Belongs to the adenylosuccinate synthetase family. In terms of assembly, homodimer. Mg(2+) serves as cofactor.

It localises to the cytoplasm. The enzyme catalyses IMP + L-aspartate + GTP = N(6)-(1,2-dicarboxyethyl)-AMP + GDP + phosphate + 2 H(+). The protein operates within purine metabolism; AMP biosynthesis via de novo pathway; AMP from IMP: step 1/2. Plays an important role in the de novo pathway of purine nucleotide biosynthesis. Catalyzes the first committed step in the biosynthesis of AMP from IMP. This Thermobifida fusca (strain YX) protein is Adenylosuccinate synthetase.